Consider the following 240-residue polypeptide: E3 ubiquitin-protein ligase LubX (240 aa).

U-box domains are found at residues 30 to 103 (TTPT…QTNY) and 125 to 198 (EIPD…RKRE).

Post-translationally, ubiquitinated in the presence of host E1 ubiquitin-activating enzyme, E2 ubiquitin-conjugating enzyme and ubiquitin.

The protein localises to the secreted. Its subcellular location is the host cell. It carries out the reaction S-ubiquitinyl-[E2 ubiquitin-conjugating enzyme]-L-cysteine + [acceptor protein]-L-lysine = [E2 ubiquitin-conjugating enzyme]-L-cysteine + N(6)-ubiquitinyl-[acceptor protein]-L-lysine.. Its function is as follows. Effector proteins function to alter host cell physiology and promote bacterial survival in host tissues. This protein is an E3 ubiquitin ligase that interferes with host's ubiquitination pathway. The polypeptide is E3 ubiquitin-protein ligase LubX (lubX) (Legionella pneumophila (strain Paris)).